The following is a 118-amino-acid chain: Large ribosomal subunit protein uL18 (118 aa).

It belongs to the universal ribosomal protein uL18 family. As to quaternary structure, part of the 50S ribosomal subunit; part of the 5S rRNA/L5/L18/L25 subcomplex. Contacts the 5S and 23S rRNAs.

This is one of the proteins that bind and probably mediate the attachment of the 5S RNA into the large ribosomal subunit, where it forms part of the central protuberance. The sequence is that of Large ribosomal subunit protein uL18 from Sulfurovum sp. (strain NBC37-1).